Here is a 274-residue protein sequence, read N- to C-terminus: GCN5-related N-acetyltransferase 7, chloroplastic (274 aa).

Residues 1–65 (MAFLCSSLPS…STFVISESVS (65 aa)) constitute a chloroplast transit peptide. One can recognise an N-acetyltransferase domain in the interval 75–267 (LRVRTFNELN…QRLLLWLALP (193 aa)). Acetyl-CoA is bound by residues 189–191 (VCV), 197–202 (RNGVGY), 228–230 (NEA), and Tyr-235. Tyr-235 (proton donor) is an active-site residue.

The protein belongs to the acetyltransferase family. GNAT subfamily. In terms of assembly, oligomer. Post-translationally, autoacetylated. In terms of tissue distribution, expressed in green tissues.

It localises to the plastid. The protein localises to the chloroplast. It catalyses the reaction an N-terminal L-alpha-aminoacyl-[protein] + acetyl-CoA = N-terminal N(alpha)-acetyl-L-alpha-aminoacyl-[protein] + CoA + H(+). The enzyme catalyses L-lysyl-[protein] + acetyl-CoA = N(6)-acetyl-L-lysyl-[protein] + CoA + H(+). The catalysed reaction is N-terminal L-alanyl-[protein] + acetyl-CoA = N-terminal N(alpha)-acetyl-L-alanyl-[protein] + CoA + H(+). It carries out the reaction N-terminal L-seryl-[protein] + acetyl-CoA = N-terminal N(alpha)-acetyl-L-seryl-[protein] + CoA + H(+). It catalyses the reaction N-terminal L-threonyl-[protein] + acetyl-CoA = N-terminal N(alpha)-acetyl-L-threonyl-[protein] + CoA + H(+). The enzyme catalyses N-terminal L-methionyl-[protein] + acetyl-CoA = N-terminal N(alpha)-acetyl-L-methionyl-[protein] + CoA + H(+). The catalysed reaction is N-terminal L-prolyl-[protein] + acetyl-CoA = N-terminal N(alpha)-acetyl-L-prolyl-[protein] + CoA + H(+). It carries out the reaction N-terminal L-valyl-[protein] + acetyl-CoA = N-terminal N(alpha)-acetyl-L-valyl-[protein] + CoA + H(+). Functionally, protein acetyltransferase with dual specificity triggering both N-alpha-acetylation (NTA), with a large spectrum of modified N-termini, including methionine, alanine, serine, threonine and to a lower extent valine and proline as substrates, and epsilon-lysine acetylation (KA). This Arabidopsis thaliana (Mouse-ear cress) protein is GCN5-related N-acetyltransferase 7, chloroplastic.